Consider the following 311-residue polypeptide: Probable protein phosphatase 2C 59 (311 aa).

The segment covering 1–14 (MGYLNSVLSSSSQV) has biased composition (low complexity). The disordered stretch occupies residues 1–26 (MGYLNSVLSSSSQVHSDDGPVSGGGL). One can recognise a PPM-type phosphatase domain in the interval 33-279 (SYGYASSPGK…DNITCVVVRF (247 aa)). 4 residues coordinate Mn(2+): Asp-69, Gly-70, Asp-231, and Asp-270.

It belongs to the PP2C family. In terms of assembly, interacts with the Pseudomonas syringae pv. maculicola effector HopW1-1 (via C-terminus). The cofactor is Mg(2+). Requires Mn(2+) as cofactor.

It catalyses the reaction O-phospho-L-seryl-[protein] + H2O = L-seryl-[protein] + phosphate. The enzyme catalyses O-phospho-L-threonyl-[protein] + H2O = L-threonyl-[protein] + phosphate. With respect to regulation, inhibited by sodium fluoride (NaF). In terms of biological role, protein phosphatase that modulates defense response to pathogenic bacteria, conferring resistance and promoting salicylic acid (SA) accumulation. In Arabidopsis thaliana (Mouse-ear cress), this protein is Probable protein phosphatase 2C 59 (WIN2).